The sequence spans 407 residues: tRNA (guanine(26)-N(2))-dimethyltransferase (407 aa).

Positions 10-400 (AVTHEGRSII…APWGEVLEAV (391 aa)) constitute a Trm1 methyltransferase domain. The S-adenosyl-L-methionine site is built by Arg50, Arg82, Asp99, and Glu128.

Belongs to the class I-like SAM-binding methyltransferase superfamily. Trm1 family.

It carries out the reaction guanosine(26) in tRNA + 2 S-adenosyl-L-methionine = N(2)-dimethylguanosine(26) in tRNA + 2 S-adenosyl-L-homocysteine + 2 H(+). Functionally, dimethylates a single guanine residue at position 26 of a number of tRNAs using S-adenosyl-L-methionine as donor of the methyl groups. This chain is tRNA (guanine(26)-N(2))-dimethyltransferase, found in Aeropyrum pernix (strain ATCC 700893 / DSM 11879 / JCM 9820 / NBRC 100138 / K1).